Reading from the N-terminus, the 498-residue chain is Glycerol kinase (498 aa).

Residue T14 coordinates ADP. Residues T14, T15, and S16 each contribute to the ATP site. T14 contacts sn-glycerol 3-phosphate. R18 contacts ADP. The sn-glycerol 3-phosphate site is built by R84, E85, and Y136. Glycerol-binding residues include R84, E85, and Y136. H232 bears the Phosphohistidine; by HPr mark. D246 is a sn-glycerol 3-phosphate binding site. The glycerol site is built by D246 and Q247. ADP contacts are provided by T268 and G311. 4 residues coordinate ATP: T268, G311, Q315, and G412. G412 and N416 together coordinate ADP.

Belongs to the FGGY kinase family. In terms of assembly, homotetramer and homodimer (in equilibrium). Post-translationally, the phosphoenolpyruvate-dependent sugar phosphotransferase system (PTS), including enzyme I, and histidine-containing protein (HPr) are required for the phosphorylation, which leads to the activation of the enzyme.

The catalysed reaction is glycerol + ATP = sn-glycerol 3-phosphate + ADP + H(+). Its pathway is polyol metabolism; glycerol degradation via glycerol kinase pathway; sn-glycerol 3-phosphate from glycerol: step 1/1. Its activity is regulated as follows. Activated by phosphorylation and inhibited by fructose 1,6-bisphosphate (FBP). Functionally, key enzyme in the regulation of glycerol uptake and metabolism. Catalyzes the phosphorylation of glycerol to yield sn-glycerol 3-phosphate. This Lactococcus lactis subsp. lactis (strain IL1403) (Streptococcus lactis) protein is Glycerol kinase.